The primary structure comprises 270 residues: 3-methyl-2-oxobutanoate hydroxymethyltransferase (270 aa).

The Mg(2+) site is built by aspartate 41 and aspartate 80. Residues 41-42, aspartate 80, and lysine 109 each bind 3-methyl-2-oxobutanoate; that span reads DS. Glutamate 111 lines the Mg(2+) pocket. Glutamate 178 (proton acceptor) is an active-site residue.

Belongs to the PanB family. As to quaternary structure, homodecamer; pentamer of dimers. Mg(2+) serves as cofactor.

The protein localises to the cytoplasm. It carries out the reaction 3-methyl-2-oxobutanoate + (6R)-5,10-methylene-5,6,7,8-tetrahydrofolate + H2O = 2-dehydropantoate + (6S)-5,6,7,8-tetrahydrofolate. It participates in cofactor biosynthesis; (R)-pantothenate biosynthesis; (R)-pantoate from 3-methyl-2-oxobutanoate: step 1/2. Catalyzes the reversible reaction in which hydroxymethyl group from 5,10-methylenetetrahydrofolate is transferred onto alpha-ketoisovalerate to form ketopantoate. The protein is 3-methyl-2-oxobutanoate hydroxymethyltransferase of Thermotoga neapolitana (strain ATCC 49049 / DSM 4359 / NBRC 107923 / NS-E).